The chain runs to 350 residues: Ferredoxin--NADP reductase (350 aa).

FAD contacts are provided by aspartate 49, glutamine 57, tyrosine 62, valine 102, phenylalanine 136, aspartate 303, and threonine 344.

Belongs to the ferredoxin--NADP reductase type 2 family. In terms of assembly, homodimer. It depends on FAD as a cofactor.

It catalyses the reaction 2 reduced [2Fe-2S]-[ferredoxin] + NADP(+) + H(+) = 2 oxidized [2Fe-2S]-[ferredoxin] + NADPH. In Granulibacter bethesdensis (strain ATCC BAA-1260 / CGDNIH1), this protein is Ferredoxin--NADP reductase.